A 1414-amino-acid chain; its full sequence is DNA-directed RNA polymerase subunit beta'' (1414 aa).

Cys-220, Cys-293, Cys-300, and Cys-303 together coordinate Zn(2+).

The protein belongs to the RNA polymerase beta' chain family. RpoC2 subfamily. In plastids the minimal PEP RNA polymerase catalytic core is composed of four subunits: alpha, beta, beta', and beta''. When a (nuclear-encoded) sigma factor is associated with the core the holoenzyme is formed, which can initiate transcription. It depends on Zn(2+) as a cofactor.

Its subcellular location is the plastid. It localises to the chloroplast. The catalysed reaction is RNA(n) + a ribonucleoside 5'-triphosphate = RNA(n+1) + diphosphate. Its function is as follows. DNA-dependent RNA polymerase catalyzes the transcription of DNA into RNA using the four ribonucleoside triphosphates as substrates. The chain is DNA-directed RNA polymerase subunit beta'' from Angiopteris evecta (Mule's foot fern).